We begin with the raw amino-acid sequence, 116 residues long: Putative pterin-4-alpha-carbinolamine dehydratase (116 aa).

It belongs to the pterin-4-alpha-carbinolamine dehydratase family.

It carries out the reaction (4aS,6R)-4a-hydroxy-L-erythro-5,6,7,8-tetrahydrobiopterin = (6R)-L-erythro-6,7-dihydrobiopterin + H2O. This Stenotrophomonas maltophilia (strain K279a) protein is Putative pterin-4-alpha-carbinolamine dehydratase.